The primary structure comprises 271 residues: MLTIDKLTKRFGEKTAVDAATIRVEKPTMIGIIGRSGAGKSTLLRMLNCLSSASEGTITFEGEEITGLRGAARRNWQSRCAMIFQQFNLVPRMDVVSNVLHGTLNKRSTFATMFNLYPQSDIHRAIEILDRLGIAEQAAKRAEALSGGQQQRVAIARALMQNPKIILADEPIASLDPMNAQVVMQALRRIHEEDGRMVIANLHTLDTARRYCDRVIGMRDGRIVFDGTPAQLTTGVARDIYGAGAGFSEAATSTEIDALDKPDIPTAKAYA.

Residues 2-245 (LTIDKLTKRF…VARDIYGAGA (244 aa)) enclose the ABC transporter domain. 34-41 (GRSGAGKS) contributes to the ATP binding site.

The protein belongs to the ABC transporter superfamily. Phosphonates importer (TC 3.A.1.9.1) family. As to quaternary structure, the complex is composed of two ATP-binding proteins (PhnC), two transmembrane proteins (PhnE) and a solute-binding protein (PhnD).

The protein localises to the cell inner membrane. It carries out the reaction phosphonate(out) + ATP + H2O = phosphonate(in) + ADP + phosphate + H(+). Part of the ABC transporter complex PhnCDE involved in phosphonates import. Responsible for energy coupling to the transport system. The chain is Phosphonates import ATP-binding protein PhnC 2 from Roseobacter denitrificans (strain ATCC 33942 / OCh 114) (Erythrobacter sp. (strain OCh 114)).